Here is a 437-residue protein sequence, read N- to C-terminus: Serine--tRNA ligase (437 aa).

Position 240–242 (240–242 (TAE)) interacts with L-serine. 271–273 (RAE) contacts ATP. Glutamate 294 provides a ligand contact to L-serine. Residue 358–361 (EISS) participates in ATP binding. L-serine is bound at residue serine 394.

The protein belongs to the class-II aminoacyl-tRNA synthetase family. Type-1 seryl-tRNA synthetase subfamily. Homodimer. The tRNA molecule binds across the dimer.

Its subcellular location is the cytoplasm. It catalyses the reaction tRNA(Ser) + L-serine + ATP = L-seryl-tRNA(Ser) + AMP + diphosphate + H(+). It carries out the reaction tRNA(Sec) + L-serine + ATP = L-seryl-tRNA(Sec) + AMP + diphosphate + H(+). The protein operates within aminoacyl-tRNA biosynthesis; selenocysteinyl-tRNA(Sec) biosynthesis; L-seryl-tRNA(Sec) from L-serine and tRNA(Sec): step 1/1. Its function is as follows. Catalyzes the attachment of serine to tRNA(Ser). Is also able to aminoacylate tRNA(Sec) with serine, to form the misacylated tRNA L-seryl-tRNA(Sec), which will be further converted into selenocysteinyl-tRNA(Sec). This chain is Serine--tRNA ligase, found in Methylobacterium nodulans (strain LMG 21967 / CNCM I-2342 / ORS 2060).